A 105-amino-acid polypeptide reads, in one-letter code: Blood plasma apolipoprotein LAL1 (105 aa).

The signal sequence occupies residues 1–21 (MKLHVAALATLAVVCILAAGS). A propeptide spanning residues 22–29 (EAAPKAMS) is cleaved from the precursor.

As to expression, plasma.

The protein localises to the secreted. The protein is Blood plasma apolipoprotein LAL1 of Petromyzon marinus (Sea lamprey).